Here is a 1550-residue protein sequence, read N- to C-terminus: Gag-Pol polyprotein (1550 aa).

G2 is lipidated: N-myristoyl glycine; by host. Residues 7-31 (VLRGKKADELEKVRLRPGGKKKYRL) are interaction with Gp41. The Nuclear export signal signature appears at 16 to 22 (LEKVRLR). Residues 26-32 (KKKYRLK) carry the Nuclear localization signal motif. The tract at residues 110-136 (AETGTAEKMPNTSRPTAPPSGKRGNYP) is disordered. Y135 carries the post-translational modification Phosphotyrosine; by host. The tract at residues 191-228 (NCVGDHQAAMQIIREIINEEAADWDSQHPIPGPLPAGQ) is interaction with human PPIA/CYPA and NUP153. Residues 279 to 365 (YNPTNILDIK…GGPGQKARLM (87 aa)) are dimerization/Multimerization of capsid protein p24. 2 consecutive CCHC-type zinc fingers follow at residues 389 to 406 (IRYWNCGKEGHSARQCRA) and 410 to 427 (QGCWKCGKPGHIMANCPE). Positions 437-508 (PTGKEASQLP…ERDTSQRGDR (72 aa)) are disordered. Over residues 456 to 469 (TNSTSGRSSSGTVG) the composition is skewed to low complexity. The segment covering 497-508 (RAERDTSQRGDR) has biased composition (basic and acidic residues). The dimerization of protease stretch occupies residues 513–517 (PQFSL). The Peptidase A2 domain maps to 532–601 (VEVLLDTGAD…TPINIFGRNI (70 aa)). Catalysis depends on D537, which acts as the For protease activity; shared with dimeric partner. Dimerization of protease stretches follow at residues 561–567 (GIGGFIN) and 600–612 (NILTALGMSLNLP). Positions 655-845 (EGQLEEAPPT…PPFQWMGCEL (191 aa)) constitute a Reverse transcriptase domain. Mg(2+) contacts are provided by D721, D796, and D797. The tract at residues 838-846 (FQWMGCELW) is RT 'primer grip'. The Tryptophan repeat motif signature appears at 1008-1024 (WEQWWDNYWQVTWIPEW). The RNase H type-1 domain occupies 1044-1167 (IPGAETFYTD…VDHLVSQGIR (124 aa)). Positions 1053, 1088, 1108, and 1159 each coordinate Mg(2+). The Integrase-type zinc finger occupies 1173 to 1214 (EKIEPAQEEHEKYHSIIKELTHKFGIPLLVARQIVNSCAQCQ). Zn(2+) contacts are provided by H1182, H1186, C1210, and C1213. In terms of domain architecture, Integrase catalytic spans 1223 to 1374 (QVNAEIGVWQ…TPAERLINMI (152 aa)). Residues D1234, D1286, and E1322 each coordinate Mg(2+). Positions 1393–1440 (FQVYYREGRDQLWKGPGELLWKGEGAVIVKVGTDIKVVPRRKAKIIRD) form a DNA-binding region, integrase-type.

Homotrimer; further assembles as hexamers of trimers. Interacts with gp41 (via C-terminus). Interacts with host CALM1; this interaction induces a conformational change in the Matrix protein, triggering exposure of the myristate group. Interacts with host AP3D1; this interaction allows the polyprotein trafficking to multivesicular bodies during virus assembly. Part of the pre-integration complex (PIC) which is composed of viral genome, matrix protein, Vpr and integrase. As to quaternary structure, homodimer; the homodimer further multimerizes as homohexamers or homopentamers. Interacts with human PPIA/CYPA. Interacts with human NUP153. Interacts with host PDZD8; this interaction stabilizes the capsid. Interacts with monkey TRIM5; this interaction destabilizes the capsid. In terms of assembly, homodimer, whose active site consists of two apposed aspartic acid residues. Heterodimer of p66 RT and p51 RT (RT p66/p51). Heterodimerization of RT is essential for DNA polymerase activity. The overall folding of the subdomains is similar in p66 RT and p51 RT but the spatial arrangements of the subdomains are dramatically different. As to quaternary structure, homotetramer; may further associate as a homohexadecamer. Part of the pre-integration complex (PIC) which is composed of viral genome, matrix protein, Vpr and integrase. Interacts with human SMARCB1/INI1 and human PSIP1/LEDGF isoform 1. Interacts with human KPNA3; this interaction might play a role in nuclear import of the pre-integration complex. Interacts with human NUP153; this interaction might play a role in nuclear import of the pre-integration complex. Requires Mg(2+) as cofactor. Specific enzymatic cleavages by the viral protease yield mature proteins. The protease is released by autocatalytic cleavage. The polyprotein is cleaved during and after budding, this process is termed maturation. Proteolytic cleavage of p66 RT removes the RNase H domain to yield the p51 RT subunit. Nucleocapsid protein p7 might be further cleaved after virus entry.

The protein localises to the host cell membrane. The protein resides in the host endosome. It is found in the host multivesicular body. Its subcellular location is the virion membrane. It localises to the host nucleus. The protein localises to the host cytoplasm. The protein resides in the virion. The enzyme catalyses Endopeptidase for which the P1 residue is preferably hydrophobic.. The catalysed reaction is Endohydrolysis of RNA in RNA/DNA hybrids. Three different cleavage modes: 1. sequence-specific internal cleavage of RNA. Human immunodeficiency virus type 1 and Moloney murine leukemia virus enzymes prefer to cleave the RNA strand one nucleotide away from the RNA-DNA junction. 2. RNA 5'-end directed cleavage 13-19 nucleotides from the RNA end. 3. DNA 3'-end directed cleavage 15-20 nucleotides away from the primer terminus.. It catalyses the reaction 3'-end directed exonucleolytic cleavage of viral RNA-DNA hybrid.. It carries out the reaction DNA(n) + a 2'-deoxyribonucleoside 5'-triphosphate = DNA(n+1) + diphosphate. Its activity is regulated as follows. Protease: The viral protease is inhibited by many synthetic protease inhibitors (PIs), such as amprenavir, atazanavir, indinavir, loprinavir, nelfinavir, ritonavir and saquinavir. Use of protease inhibitors in tritherapy regimens permit more ambitious therapeutic strategies. Reverse transcriptase/ribonuclease H: RT can be inhibited either by nucleoside RT inhibitors (NRTIs) or by non nucleoside RT inhibitors (NNRTIs). NRTIs act as chain terminators, whereas NNRTIs inhibit DNA polymerization by binding a small hydrophobic pocket near the RT active site and inducing an allosteric change in this region. Classical NRTIs are abacavir, adefovir (PMEA), didanosine (ddI), lamivudine (3TC), stavudine (d4T), tenofovir (PMPA), zalcitabine (ddC), and zidovudine (AZT). Classical NNRTIs are atevirdine (BHAP U-87201E), delavirdine, efavirenz (DMP-266), emivirine (I-EBU), and nevirapine (BI-RG-587). The tritherapies used as a basic effective treatment of AIDS associate two NRTIs and one NNRTI. Mediates, with Gag polyprotein, the essential events in virion assembly, including binding the plasma membrane, making the protein-protein interactions necessary to create spherical particles, recruiting the viral Env proteins, and packaging the genomic RNA via direct interactions with the RNA packaging sequence (Psi). Gag-Pol polyprotein may regulate its own translation, by the binding genomic RNA in the 5'-UTR. At low concentration, the polyprotein would promote translation, whereas at high concentration, the polyprotein would encapsidate genomic RNA and then shut off translation. In terms of biological role, targets the polyprotein to the plasma membrane via a multipartite membrane-binding signal, that includes its myristoylated N-terminus. Matrix protein is part of the pre-integration complex. Implicated in the release from host cell mediated by Vpu. Binds to RNA. Its function is as follows. Forms the conical core that encapsulates the genomic RNA-nucleocapsid complex in the virion. Most core are conical, with only 7% tubular. The core is constituted by capsid protein hexamer subunits. The core is disassembled soon after virion entry. Host restriction factors such as TRIM5-alpha or TRIMCyp bind retroviral capsids and cause premature capsid disassembly, leading to blocks in reverse transcription. Capsid restriction by TRIM5 is one of the factors which restricts HIV-1 to the human species. Host PIN1 apparently facilitates the virion uncoating. On the other hand, interactions with PDZD8 or CYPA stabilize the capsid. Functionally, encapsulates and protects viral dimeric unspliced genomic RNA (gRNA). Binds these RNAs through its zinc fingers. Acts as a nucleic acid chaperone which is involved in rearangement of nucleic acid secondary structure during gRNA retrotranscription. Also facilitates template switch leading to recombination. As part of the polyprotein, participates in gRNA dimerization, packaging, tRNA incorporation and virion assembly. Aspartyl protease that mediates proteolytic cleavages of Gag and Gag-Pol polyproteins during or shortly after the release of the virion from the plasma membrane. Cleavages take place as an ordered, step-wise cascade to yield mature proteins. This process is called maturation. Displays maximal activity during the budding process just prior to particle release from the cell. Also cleaves Nef and Vif, probably concomitantly with viral structural proteins on maturation of virus particles. Hydrolyzes host EIF4GI and PABP1 in order to shut off the capped cellular mRNA translation. The resulting inhibition of cellular protein synthesis serves to ensure maximal viral gene expression and to evade host immune response. In terms of biological role, multifunctional enzyme that converts the viral RNA genome into dsDNA in the cytoplasm, shortly after virus entry into the cell. This enzyme displays a DNA polymerase activity that can copy either DNA or RNA templates, and a ribonuclease H (RNase H) activity that cleaves the RNA strand of RNA-DNA heteroduplexes in a partially processive 3' to 5' endonucleasic mode. Conversion of viral genomic RNA into dsDNA requires many steps. A tRNA(3)-Lys binds to the primer-binding site (PBS) situated at the 5'-end of the viral RNA. RT uses the 3' end of the tRNA primer to perform a short round of RNA-dependent minus-strand DNA synthesis. The reading proceeds through the U5 region and ends after the repeated (R) region which is present at both ends of viral RNA. The portion of the RNA-DNA heteroduplex is digested by the RNase H, resulting in a ssDNA product attached to the tRNA primer. This ssDNA/tRNA hybridizes with the identical R region situated at the 3' end of viral RNA. This template exchange, known as minus-strand DNA strong stop transfer, can be either intra- or intermolecular. RT uses the 3' end of this newly synthesized short ssDNA to perform the RNA-dependent minus-strand DNA synthesis of the whole template. RNase H digests the RNA template except for two polypurine tracts (PPTs) situated at the 5'-end and near the center of the genome. It is not clear if both polymerase and RNase H activities are simultaneous. RNase H probably can proceed both in a polymerase-dependent (RNA cut into small fragments by the same RT performing DNA synthesis) and a polymerase-independent mode (cleavage of remaining RNA fragments by free RTs). Secondly, RT performs DNA-directed plus-strand DNA synthesis using the PPTs that have not been removed by RNase H as primers. PPTs and tRNA primers are then removed by RNase H. The 3' and 5' ssDNA PBS regions hybridize to form a circular dsDNA intermediate. Strand displacement synthesis by RT to the PBS and PPT ends produces a blunt ended, linear dsDNA copy of the viral genome that includes long terminal repeats (LTRs) at both ends. Its function is as follows. Catalyzes viral DNA integration into the host chromosome, by performing a series of DNA cutting and joining reactions. This enzyme activity takes place after virion entry into a cell and reverse transcription of the RNA genome in dsDNA. The first step in the integration process is 3' processing. This step requires a complex comprising the viral genome, matrix protein, Vpr and integrase. This complex is called the pre-integration complex (PIC). The integrase protein removes 2 nucleotides from each 3' end of the viral DNA, leaving recessed CA OH's at the 3' ends. In the second step, the PIC enters cell nucleus. This process is mediated through integrase and Vpr proteins, and allows the virus to infect a non dividing cell. This ability to enter the nucleus is specific of lentiviruses, other retroviruses cannot and rely on cell division to access cell chromosomes. In the third step, termed strand transfer, the integrase protein joins the previously processed 3' ends to the 5' ends of strands of target cellular DNA at the site of integration. The 5'-ends are produced by integrase-catalyzed staggered cuts, 5 bp apart. A Y-shaped, gapped, recombination intermediate results, with the 5'-ends of the viral DNA strands and the 3' ends of target DNA strands remaining unjoined, flanking a gap of 5 bp. The last step is viral DNA integration into host chromosome. This involves host DNA repair synthesis in which the 5 bp gaps between the unjoined strands are filled in and then ligated. Since this process occurs at both cuts flanking the HIV genome, a 5 bp duplication of host DNA is produced at the ends of HIV-1 integration. Alternatively, Integrase may catalyze the excision of viral DNA just after strand transfer, this is termed disintegration. The chain is Gag-Pol polyprotein (gag-pol) from Homo sapiens (Human).